A 224-amino-acid chain; its full sequence is Imidazole glycerol phosphate synthase subunit HisH (224 aa).

Positions 5–214 (DTIIIDTGCA…MKMNAGSFAG (210 aa)) constitute a Glutamine amidotransferase type-1 domain. C80 functions as the Nucleophile in the catalytic mechanism. Catalysis depends on residues H189 and E191.

As to quaternary structure, heterodimer of HisH and HisF.

It is found in the cytoplasm. The enzyme catalyses 5-[(5-phospho-1-deoxy-D-ribulos-1-ylimino)methylamino]-1-(5-phospho-beta-D-ribosyl)imidazole-4-carboxamide + L-glutamine = D-erythro-1-(imidazol-4-yl)glycerol 3-phosphate + 5-amino-1-(5-phospho-beta-D-ribosyl)imidazole-4-carboxamide + L-glutamate + H(+). It catalyses the reaction L-glutamine + H2O = L-glutamate + NH4(+). Its pathway is amino-acid biosynthesis; L-histidine biosynthesis; L-histidine from 5-phospho-alpha-D-ribose 1-diphosphate: step 5/9. Functionally, IGPS catalyzes the conversion of PRFAR and glutamine to IGP, AICAR and glutamate. The HisH subunit catalyzes the hydrolysis of glutamine to glutamate and ammonia as part of the synthesis of IGP and AICAR. The resulting ammonia molecule is channeled to the active site of HisF. The protein is Imidazole glycerol phosphate synthase subunit HisH of Shewanella loihica (strain ATCC BAA-1088 / PV-4).